The primary structure comprises 578 residues: MTFSIENNKQVVLGEELGKLSDNERLKTQSNFLRGTIEQDLQDRITGGFTADNFQLIRFHGMYQQDDRDIRNERAKQKLEPLHNVMLRARMPGGIITPKQWLAIDKFATEHSLYGSIRLTTRQTFQFHGVLKPNIKLMHQTLNSIGIDSIATAGDVNRNVLCTTNPVESELHQEAYEWAKKISEHLLPKTKAYAEIWLDGEKVETTEDDEPILGKTYLPRKFKTTVVIPPQNDVDVHANDLNFVAIAENGKLIGFNVLVGGGLAMTHGDTSTYPRRADDFGYIPLEKTLDVAAAVVTTQRDWGNRSNRKNAKTKYTLDRVGTDVFKAEVEKRAGIKFEVSRPYEFTERGDRIGWVEGIDGKHHLTLFIENGRLLDYPGKPLKTGVAEIAKIHKGDFRMTANQNLIVAGVSKSNKAKIEKLAREHGLMDEGVSEQRKNSMACVAFPTCPLAMAEAERFLPQFVTDVEGILDKHGLDKEDNIILRVTGCPNGCGRAMLAEIGLVGKAPGRYNLHLGGNRGGTRVPKMYKENITEKQILEEIDQLVGRWANERLPNECFGDFTVRVGIIEEVIISKRDFYA.

Positions 441, 447, 487, and 491 each coordinate [4Fe-4S] cluster. Cys-491 contributes to the siroheme binding site.

Belongs to the nitrite and sulfite reductase 4Fe-4S domain family. As to quaternary structure, alpha(8)-beta(8). The alpha component is a flavoprotein, the beta component is a hemoprotein. It depends on siroheme as a cofactor. Requires [4Fe-4S] cluster as cofactor.

It carries out the reaction hydrogen sulfide + 3 NADP(+) + 3 H2O = sulfite + 3 NADPH + 4 H(+). Its pathway is sulfur metabolism; hydrogen sulfide biosynthesis; hydrogen sulfide from sulfite (NADPH route): step 1/1. Its function is as follows. Component of the sulfite reductase complex that catalyzes the 6-electron reduction of sulfite to sulfide. This is one of several activities required for the biosynthesis of L-cysteine from sulfate. This chain is Sulfite reductase [NADPH] hemoprotein beta-component, found in Vibrio vulnificus (strain YJ016).